The chain runs to 338 residues: UPF0284 protein TV0153 (338 aa).

Belongs to the UPF0284 family.

This chain is UPF0284 protein TV0153, found in Thermoplasma volcanium (strain ATCC 51530 / DSM 4299 / JCM 9571 / NBRC 15438 / GSS1).